The sequence spans 115 residues: NADH-ubiquinone oxidoreductase chain 3 (115 aa).

Helical transmembrane passes span 3 to 23 (LPLA…IAFW), 55 to 75 (FFLV…LLPL), and 86 to 106 (LMLT…AYEW).

It belongs to the complex I subunit 3 family. As to quaternary structure, core subunit of respiratory chain NADH dehydrogenase (Complex I) which is composed of 45 different subunits. Interacts with TMEM186. Interacts with TMEM242.

The protein localises to the mitochondrion inner membrane. It catalyses the reaction a ubiquinone + NADH + 5 H(+)(in) = a ubiquinol + NAD(+) + 4 H(+)(out). In terms of biological role, core subunit of the mitochondrial membrane respiratory chain NADH dehydrogenase (Complex I) which catalyzes electron transfer from NADH through the respiratory chain, using ubiquinone as an electron acceptor. Essential for the catalytic activity of complex I. In Lemur catta (Ring-tailed lemur), this protein is NADH-ubiquinone oxidoreductase chain 3.